A 196-amino-acid chain; its full sequence is DnaA initiator-associating protein DiaA (196 aa).

An SIS domain is found at 34–196 (MVQSLLNGNK…DNTLFPHQDD (163 aa)).

It belongs to the SIS family. DiaA subfamily. Homotetramer; dimer of dimers.

Functionally, required for the timely initiation of chromosomal replication via direct interactions with the DnaA initiator protein. This chain is DnaA initiator-associating protein DiaA, found in Photorhabdus laumondii subsp. laumondii (strain DSM 15139 / CIP 105565 / TT01) (Photorhabdus luminescens subsp. laumondii).